Here is a 184-residue protein sequence, read N- to C-terminus: Photosystem I assembly protein Ycf4 (184 aa).

The next 2 helical transmembrane spans lie at 22-42 and 57-77; these read FCWAFILFVGSVGFLLVGISS and IVFFPQGIVMSFYGIAGLFIS.

It belongs to the Ycf4 family.

It is found in the plastid. The protein localises to the chloroplast thylakoid membrane. Seems to be required for the assembly of the photosystem I complex. The chain is Photosystem I assembly protein Ycf4 from Coffea arabica (Arabian coffee).